Reading from the N-terminus, the 395-residue chain is Putative gustatory receptor 58a (395 aa).

Residues 1-32 lie on the Cytoplasmic side of the membrane; the sequence is MLLKFMYIYGIGCGLMPAPLKKGQFLLGYKQR. Residues 33 to 53 traverse the membrane as a helical segment; sequence WYLIYTACLHGGLLTVLPFTF. Topologically, residues 54–72 are extracellular; sequence PHYMYDDSYMSSNPVLKWT. The helical transmembrane segment at 73 to 93 threads the bilayer; that stretch reads FNLTNITRIMAMFSGVLLMWF. At 94-131 the chain is on the cytoplasmic side; that stretch reads RRKRILNLGENLILHCLKCKTLDNRSKKYSKLRKRVRN. The helical transmembrane segment at 132-152 threads the bilayer; sequence VLFQMLLVANLSILLGALILF. Residues 153–169 lie on the Extracellular side of the membrane; it reads RIHSVQRISKTAMIVAH. Residues 170-190 form a helical membrane-spanning segment; it reads ITQFIYVVFMMTGICVILLVL. At 191 to 250 the chain is on the cytoplasmic side; that stretch reads HWQSERLQIALKDLCSFLNHEERNSLTLSENKANRSLGKLAKLFKLFAENQRLVREVFRT. The helical transmembrane segment at 251–271 threads the bilayer; it reads FDLPIALLLLKMFVTNVNLVY. Residues 272 to 288 are Extracellular-facing; it reads HGVQFGNDTIETSSYTR. An N-linked (GlcNAc...) asparagine glycan is attached at Asn-278. Residues 289-309 traverse the membrane as a helical segment; that stretch reads IVGQWVVISHYWSAVLLMNVV. Residues 310 to 366 are Cytoplasmic-facing; it reads DDVTRRSDLKMGDLLREFSHLELVKRDFHLQLELFSDHLRCHPSTYKVCGLFIFNKQ. A helical membrane pass occupies residues 367–387; that stretch reads TSLAYFFYVLVQVLVLVQFDL. Topologically, residues 388–395 are extracellular; that stretch reads KNKVEKRN.

Belongs to the insect chemoreceptor superfamily. Gustatory receptor (GR) family. Gr22e subfamily. In terms of tissue distribution, expressed in the adult labellar chemosensory neurons.

It is found in the cell membrane. Functionally, probable gustatory receptor which mediates acceptance or avoidance behavior, depending on its substrates. The polypeptide is Putative gustatory receptor 58a (Gr58a) (Drosophila melanogaster (Fruit fly)).